A 49-amino-acid chain; its full sequence is Large ribosomal subunit protein bL33A (49 aa).

It belongs to the bacterial ribosomal protein bL33 family.

This Lactobacillus johnsonii (strain CNCM I-12250 / La1 / NCC 533) protein is Large ribosomal subunit protein bL33A.